Here is a 564-residue protein sequence, read N- to C-terminus: MTMTLLSYLSSLCREATLSAFPQIDTFSPDITQSTKEHFGHYQCNDAMKLARTLKMAPRAIAEAIVNHIPKEIFTSIEIAGAGFINFTFSKEFLNNSLKTFSEELSSGFRVKDPKKVVIDFSSPNIAKDMHVGHLRSTIIGDCLARVFAFVGNDVSRLNHIGDWGTAFGMLITYLQEEPSEDIENLEDLTVLYKKAHARFAEDAEFKKRSQTNVVALQAGDPSALKLWKQICAISERAFQKIYNILDIAIEKRGESFYNPFLPEIIQDLENKNLITISDNAKCVFHEGFSIPLMVQKSDGGYNYATTDLAAMRYRVNNDGADKIIIVTDMGQSLHFQLLEATALAAGYLPNKETFSHVGFGLVLDSEGKKFKTRSGENIKLKELLDTAIDQAKATLKEHRPEISDEEISSRAPILGINAIKYADLSSHRVSDYIFSFEKMLRFEGNTAMFLLYAYVRIQGIKRRLGIETLDLEATPNIQEPSEEALALALLRFPEAIDLTLKDLCPHFLTDYLYMLTNKFNAFFRDCHIEGSSHQKERLYLCALVEKTLAAGMHLLGLQTLDKL.

A 'HIGH' region motif is present at residues 124–134 (PNIAKDMHVGH).

It belongs to the class-I aminoacyl-tRNA synthetase family. In terms of assembly, monomer.

Its subcellular location is the cytoplasm. The enzyme catalyses tRNA(Arg) + L-arginine + ATP = L-arginyl-tRNA(Arg) + AMP + diphosphate. This Chlamydia caviae (strain ATCC VR-813 / DSM 19441 / 03DC25 / GPIC) (Chlamydophila caviae) protein is Arginine--tRNA ligase.